Reading from the N-terminus, the 237-residue chain is Ras modification protein ERF4 (237 aa).

Belongs to the ERF4 family. In terms of assembly, interacts with ERF2.

The protein localises to the endoplasmic reticulum membrane. Its function is as follows. The ERF2-SHR5 complex is a palmitoyltransferase specific for Ras proteins. Palmitoylates RAS2, which is required for its proper plasma membrane localization. The chain is Ras modification protein ERF4 (SHR5) from Saccharomyces cerevisiae (strain ATCC 204508 / S288c) (Baker's yeast).